Here is a 358-residue protein sequence, read N- to C-terminus: Probable dual-specificity RNA methyltransferase RlmN 1 (358 aa).

Residues 101–326 (MQAGGTLCIS…REKGFYTLLR (226 aa)) enclose the Radical SAM core domain. An intrachain disulfide couples C108 to C337. Residues C115, C119, and C122 each contribute to the [4Fe-4S] cluster site. Residues 162–163 (GE), S194, 218–220 (SLN), and N294 contribute to the S-adenosyl-L-methionine site. C337 functions as the S-methylcysteine intermediate in the catalytic mechanism.

The protein belongs to the radical SAM superfamily. RlmN family. [4Fe-4S] cluster serves as cofactor.

It is found in the cytoplasm. It carries out the reaction adenosine(2503) in 23S rRNA + 2 reduced [2Fe-2S]-[ferredoxin] + 2 S-adenosyl-L-methionine = 2-methyladenosine(2503) in 23S rRNA + 5'-deoxyadenosine + L-methionine + 2 oxidized [2Fe-2S]-[ferredoxin] + S-adenosyl-L-homocysteine. The enzyme catalyses adenosine(37) in tRNA + 2 reduced [2Fe-2S]-[ferredoxin] + 2 S-adenosyl-L-methionine = 2-methyladenosine(37) in tRNA + 5'-deoxyadenosine + L-methionine + 2 oxidized [2Fe-2S]-[ferredoxin] + S-adenosyl-L-homocysteine. Functionally, specifically methylates position 2 of adenine 2503 in 23S rRNA and position 2 of adenine 37 in tRNAs. This is Probable dual-specificity RNA methyltransferase RlmN 1 from Protochlamydia amoebophila (strain UWE25).